Consider the following 732-residue polypeptide: MAP7 domain-containing protein 2 (732 aa).

Position 1 is an N-acetylmethionine (Met1). A compositionally biased stretch (gly residues) spans 1–10; sequence MERGGGGSGT. Disordered stretches follow at residues 1–64, 95–123, 157–186, 210–244, and 279–509; these read MERG…RREE, WRKL…LREE, PGGH…KRLS, GPLN…GKEA, and EFSG…KQKE. Residues 49 to 64 show a composition bias toward basic and acidic residues; the sequence is LKSDERQRLAKERREE. Residues 51–146 are a coiled coil; that stretch reads SDERQRLAKE…RTQQLELKKK (96 aa). The span at 329 to 345 shows a compositional bias: basic and acidic residues; the sequence is MPKRKAEKEKSNKEREG. Residues 347–357 are compositionally biased toward low complexity; sequence LAQQAAGPQGE. Residues 359 to 374 show a composition bias toward basic and acidic residues; that stretch reads ALEKHVVDKHASEKHA. Over residues 375 to 386 the composition is skewed to low complexity; the sequence is AAAGGKAENSAA. The span at 404-509 shows a compositional bias: basic and acidic residues; it reads LAEKRRQARL…EKAMIEKQKE (106 aa).

It belongs to the MAP7 family. Interacts (via N-terminus) with microtubules; facilitates microtubule stabilization. Interacts with kinesin-1 family members, KIF5A, KIF5B and KIF5C.

The protein localises to the cytoplasm. It is found in the cytoskeleton. The protein resides in the microtubule organizing center. It localises to the centrosome. Its subcellular location is the midbody. The protein localises to the cell projection. It is found in the neuron projection. The protein resides in the axon. Functionally, microtubule-stabilizing protein that plays a role in the control of cell motility and neurite outgrowth via direct binding to the microtubule. Acts as a critical cofactor for kinesin transport. In the proximal axon, regulates kinesin-1 family members, KIF5A, KIF5B and KIF5C recruitment to microtubules and contributes to kinesin-1-mediated transport in the axons. This is MAP7 domain-containing protein 2 (MAP7D2) from Homo sapiens (Human).